The sequence spans 294 residues: Decaprenyl-diphosphate synthase subunit 2 (294 aa).

Belongs to the FPP/GGPP synthase family. Heterotetramer of 2 dps1 and 2 dlp1 subunits.

The protein localises to the mitochondrion. It catalyses the reaction 7 isopentenyl diphosphate + (2E,6E)-farnesyl diphosphate = all-trans-decaprenyl diphosphate + 7 diphosphate. The protein operates within cofactor biosynthesis; ubiquinone biosynthesis. Functionally, supplies decaprenyl diphosphate, the precursor for the side chain of the isoprenoid quinones ubiquinone-10. In Schizosaccharomyces pombe (strain 972 / ATCC 24843) (Fission yeast), this protein is Decaprenyl-diphosphate synthase subunit 2 (dlp1).